A 159-amino-acid polypeptide reads, in one-letter code: Betainyl-CoA thioesterase (159 aa).

The protein belongs to the betainyl-CoA thioesterase family.

The catalysed reaction is N,N,N-trimethylglycyl-CoA + H2O = glycine betaine + CoA + H(+). It participates in amine and polyamine metabolism; carnitine metabolism. In terms of biological role, catalyzes the cleavage of betainyl-CoA (N,N,N-trimethylglycyl-CoA) into glycine betaine and coenzyme A. Is involved in a L-carnitine degradation pathway that allows P.aeruginosa to grow on L-carnitine as the sole source of carbon and nitrogen. The polypeptide is Betainyl-CoA thioesterase (Pseudomonas aeruginosa (strain ATCC 15692 / DSM 22644 / CIP 104116 / JCM 14847 / LMG 12228 / 1C / PRS 101 / PAO1)).